Consider the following 166-residue polypeptide: MITYKNILIAVDGSHEAEWAFNRAVGVAKRNDAKLTIVNVIDSRTYSSYEVYDAQFTEKSKHFAEELLNGYKEVATNAGVKDVETRLEFGSPKSIIPKKLAHEINADLIMSGTSGLNAVERFIVGSVSESIVRHAPCDVLVVRTEELPADFQPQVATTQLREKYQN.

Belongs to the universal stress protein A family.

The protein resides in the cytoplasm. This chain is Putative universal stress protein SA1532, found in Staphylococcus aureus (strain N315).